Here is a 239-residue protein sequence, read N- to C-terminus: Octanoyltransferase (239 aa).

The region spanning 48-236 (EGGDELVWLV…AFETVFGETV (189 aa)) is the BPL/LPL catalytic domain. Substrate contacts are provided by residues 87 to 94 (RGGEYTYH), 167 to 169 (ALG), and 180 to 182 (GLS). Cys198 serves as the catalytic Acyl-thioester intermediate.

It belongs to the LipB family.

Its subcellular location is the cytoplasm. It carries out the reaction octanoyl-[ACP] + L-lysyl-[protein] = N(6)-octanoyl-L-lysyl-[protein] + holo-[ACP] + H(+). Its pathway is protein modification; protein lipoylation via endogenous pathway; protein N(6)-(lipoyl)lysine from octanoyl-[acyl-carrier-protein]: step 1/2. In terms of biological role, catalyzes the transfer of endogenously produced octanoic acid from octanoyl-acyl-carrier-protein onto the lipoyl domains of lipoate-dependent enzymes. Lipoyl-ACP can also act as a substrate although octanoyl-ACP is likely to be the physiological substrate. The polypeptide is Octanoyltransferase (Rhizobium etli (strain CIAT 652)).